Consider the following 756-residue polypeptide: LIM domain and actin-binding protein 1 (756 aa).

M1 carries the post-translational modification N-acetylmethionine. S15 and S55 each carry phosphoserine. Basic and acidic residues predominate over residues 44-56 (AAEEANMEKRRSN). Disordered stretches follow at residues 44-183 (AAEE…SNKI) and 204-377 (QTKI…AVKK). The segment covering 107–118 (EVASSSASGVEA) has biased composition (low complexity). At S130 the chain carries Phosphoserine. Residues 140–173 (RIKDTEHLKDHSAESKKMENCLAESRHEVGKPET) are compositionally biased toward basic and acidic residues. Positions 164 to 166 (SRH) match the Required for interaction with NPC1L1 motif. S221 bears the Phosphoserine mark. Y225 carries the post-translational modification Phosphotyrosine. Phosphoserine is present on residues S226 and S238. The span at 245–254 (EKSESRRNLE) shows a compositional bias: basic and acidic residues. Phosphoserine is present on S259. Polar residues predominate over residues 274–287 (VSKQSSSTNYTNEL). The span at 294–303 (IKTHKLEQKE) shows a compositional bias: basic and acidic residues. Phosphoserine is present on residues S339, S346, S358, S365, and S370. The region spanning 384-444 (ETCVECQKTV…KPHFNQLFKS (61 aa)) is the LIM zinc-binding domain. K435 carries the post-translational modification N6-succinyllysine. The residue at position 486 (S486) is a Phosphoserine. A required for interaction with MYO5B region spans residues 489-509 (VEDAPIAKVGVLTASMEAKAS). The segment at 508 to 726 (ASSQLEKEDK…TTQKQKSQDV (219 aa)) is disordered. The span at 512-523 (LEKEDKPAETKK) shows a compositional bias: basic and acidic residues. Residues 533 to 542 (ELSSSGSALE) show a composition bias toward low complexity. The segment covering 552–563 (WPPEDEVSKPEA) has biased composition (basic and acidic residues). 4 positions are modified to phosphoserine: S597, S600, S605, and S613. Positions 627 to 637 (AERKQMEKASA) are enriched in basic and acidic residues. Positions 638 to 651 (SEKNGSVGKTTWPS) are enriched in polar residues. The segment covering 652–667 (KESRGGEAAGRSKEVQ) has biased composition (basic and acidic residues). Residues 691–721 (LQQQSPLEPKSKNWSSFADNTSAKEFTTQKQ) show a composition bias toward polar residues. A phosphoserine mark is found at S695, S723, and S738.

Interacts with NPC1L1; bridges NPC1L1 with MYO5B. Interacts with MYO5B; bridges MYO5B with NPC1L1. Interacts with PXN; this complex stabilizes actin dynamics. Interacts with F-actin and G-actin. Interacts with LUZP1 (via C-terminus); both proteins restrict ciliation and may work together to regulate this process. Binds RAB40B (GTP-bound); interaction influences LIMA1 subcellular localization in lamellipodia during cell migration. Phosphorylation of the C-terminal region by MAPK1/MAPK3 reduces its association with F-actin and contributes to actin filament reorganization and enhances cell motility. Post-translationally, ubiquitinated by the ECS(RAB40B) complex leading to its degradation. Widely expressed. Highest levels of isoform 2 are expressed in lung, spleen and small intestine. Isoform 2 is expressed at higher levels than isoform 1 in most tissues except liver, fat and kidney. Isoform 1 and isoform 2 are expressed at low levels in skeletal muscle, heart, stomach and lymph.

It localises to the cytoplasm. Its subcellular location is the cell junction. The protein resides in the focal adhesion. It is found in the cytoskeleton. The protein localises to the stress fiber. It localises to the cell membrane. Its subcellular location is the cell projection. The protein resides in the ruffle. It is found in the lamellipodium. Functionally, actin-binding protein involved in actin cytoskeleton regulation and dynamics. Increases the number and size of actin stress fibers and inhibits membrane ruffling. Inhibits actin filament depolymerization. Bundles actin filaments, delays filament nucleation and reduces formation of branched filaments. Acts as a negative regulator of primary cilium formation. Plays a role in cholesterol homeostasis. Influences plasma cholesterol levels through regulation of intestinal cholesterol absorption. May act as a scaffold protein by regulating NPC1L1 transportation, an essential protein for cholesterol absorption, to the plasma membrane by recruiting MYO5B to NPC1L1, and thus facilitates cholesterol uptake. In Sus scrofa (Pig), this protein is LIM domain and actin-binding protein 1.